Here is a 330-residue protein sequence, read N- to C-terminus: Phosphate acyltransferase (330 aa).

The protein belongs to the PlsX family. Homodimer. Probably interacts with PlsY.

It is found in the cytoplasm. It catalyses the reaction a fatty acyl-[ACP] + phosphate = an acyl phosphate + holo-[ACP]. It participates in lipid metabolism; phospholipid metabolism. Catalyzes the reversible formation of acyl-phosphate (acyl-PO(4)) from acyl-[acyl-carrier-protein] (acyl-ACP). This enzyme utilizes acyl-ACP as fatty acyl donor, but not acyl-CoA. The polypeptide is Phosphate acyltransferase (Bacillus anthracis (strain A0248)).